Here is a 227-residue protein sequence, read N- to C-terminus: Cytochrome c oxidase subunit 2 (227 aa).

Residues 1–14 lie on the Mitochondrial intermembrane side of the membrane; the sequence is MAYPFQLGLQDATS. Residues 15–45 form a helical membrane-spanning segment; it reads PIMEELTSFHDHTLMIVFLISSLVLYIILLM. The Mitochondrial matrix portion of the chain corresponds to 46–59; it reads LTTKLTHTSTMDAQ. A helical membrane pass occupies residues 60–87; that stretch reads EVETIWTILPAVILILIALPSLRILYMM. Over 88-227 the chain is Mitochondrial intermembrane; the sequence is DEINNPALTV…HFENWSASMI (140 aa). Residues histidine 161, cysteine 196, glutamate 198, cysteine 200, histidine 204, and methionine 207 each coordinate Cu cation. A Mg(2+)-binding site is contributed by glutamate 198.

It belongs to the cytochrome c oxidase subunit 2 family. As to quaternary structure, component of the cytochrome c oxidase (complex IV, CIV), a multisubunit enzyme composed of 14 subunits. The complex is composed of a catalytic core of 3 subunits MT-CO1, MT-CO2 and MT-CO3, encoded in the mitochondrial DNA, and 11 supernumerary subunits COX4I, COX5A, COX5B, COX6A, COX6B, COX6C, COX7A, COX7B, COX7C, COX8 and NDUFA4, which are encoded in the nuclear genome. The complex exists as a monomer or a dimer and forms supercomplexes (SCs) in the inner mitochondrial membrane with NADH-ubiquinone oxidoreductase (complex I, CI) and ubiquinol-cytochrome c oxidoreductase (cytochrome b-c1 complex, complex III, CIII), resulting in different assemblies (supercomplex SCI(1)III(2)IV(1) and megacomplex MCI(2)III(2)IV(2)). Found in a complex with TMEM177, COA6, COX18, COX20, SCO1 and SCO2. Interacts with TMEM177 in a COX20-dependent manner. Interacts with COX20. Interacts with COX16. Requires Cu cation as cofactor.

It localises to the mitochondrion inner membrane. The enzyme catalyses 4 Fe(II)-[cytochrome c] + O2 + 8 H(+)(in) = 4 Fe(III)-[cytochrome c] + 2 H2O + 4 H(+)(out). Functionally, component of the cytochrome c oxidase, the last enzyme in the mitochondrial electron transport chain which drives oxidative phosphorylation. The respiratory chain contains 3 multisubunit complexes succinate dehydrogenase (complex II, CII), ubiquinol-cytochrome c oxidoreductase (cytochrome b-c1 complex, complex III, CIII) and cytochrome c oxidase (complex IV, CIV), that cooperate to transfer electrons derived from NADH and succinate to molecular oxygen, creating an electrochemical gradient over the inner membrane that drives transmembrane transport and the ATP synthase. Cytochrome c oxidase is the component of the respiratory chain that catalyzes the reduction of oxygen to water. Electrons originating from reduced cytochrome c in the intermembrane space (IMS) are transferred via the dinuclear copper A center (CU(A)) of subunit 2 and heme A of subunit 1 to the active site in subunit 1, a binuclear center (BNC) formed by heme A3 and copper B (CU(B)). The BNC reduces molecular oxygen to 2 water molecules using 4 electrons from cytochrome c in the IMS and 4 protons from the mitochondrial matrix. This Anisomys imitator (Uneven-toothed rat) protein is Cytochrome c oxidase subunit 2 (MT-CO2).